The chain runs to 270 residues: Phosphatidate cytidylyltransferase (270 aa).

The next 7 helical transmembrane spans lie at Leu-19 to Ala-39, Thr-53 to Leu-73, Gly-76 to Trp-96, Gly-101 to Arg-121, Phe-126 to Tyr-146, Leu-183 to Leu-203, and Ala-248 to Phe-268.

The protein belongs to the CDS family.

Its subcellular location is the cell inner membrane. The catalysed reaction is a 1,2-diacyl-sn-glycero-3-phosphate + CTP + H(+) = a CDP-1,2-diacyl-sn-glycerol + diphosphate. It functions in the pathway phospholipid metabolism; CDP-diacylglycerol biosynthesis; CDP-diacylglycerol from sn-glycerol 3-phosphate: step 3/3. This Brucella abortus (strain 2308) protein is Phosphatidate cytidylyltransferase (cdsA).